The chain runs to 297 residues: Nucleotide-binding protein DSY4845 (297 aa).

13-20 (GLSGAGKT) is an ATP binding site. Position 64-67 (64-67 (DLRG)) interacts with GTP.

The protein belongs to the RapZ-like family.

Its function is as follows. Displays ATPase and GTPase activities. The protein is Nucleotide-binding protein DSY4845 of Desulfitobacterium hafniense (strain Y51).